Reading from the N-terminus, the 492-residue chain is Acyl-CoA-binding domain-containing protein 5 (492 aa).

The region spanning 8 to 97 (HATRFEAAVK…MKKILESMPM (90 aa)) is the ACB domain. Residues 19-28 (IQSLPKNGSF), 39-43 (YSFYK), K65, and Y84 contribute to the an acyl-CoA site. Disordered regions lie at residues 141 to 162 (AVNGKAESSDSGAESEEEGLRE) and 335 to 399 (VKCG…DRGP). Residues 153-162 (AESEEEGLRE) are compositionally biased toward acidic residues. Basic and acidic residues predominate over residues 335–360 (VKCGGEDGKASNGAPHKEKKDGEKAD). The segment covering 378 to 388 (GSQGGQMGNGG) has biased composition (gly residues). The span at 389 to 399 (DGERWGSDRGP) shows a compositional bias: basic and acidic residues. A coiled-coil region spans residues 405–431 (EQIAVVLMRLQEDMQNVLQRLHMLEAV). Residues 464–484 (GVLAFAIVWPFIAQWLVHVYL) traverse the membrane as a helical segment.

The protein belongs to the ATG37 family.

The protein localises to the peroxisome membrane. Functionally, acyl-CoA binding protein which acts as the peroxisome receptor for pexophagy but is dispensable for aggrephagy and nonselective autophagy. Binds medium- and long-chain acyl-CoA esters. The sequence is that of Acyl-CoA-binding domain-containing protein 5 (ACBD5) from Gallus gallus (Chicken).